Here is a 638-residue protein sequence, read N- to C-terminus: Zinc finger protein 143 (638 aa).

N-acetylmethionine is present on Met1. A Glycyl lysine isopeptide (Lys-Gly) (interchain with G-Cter in SUMO2) cross-link involves residue Lys213. 4 C2H2-type zinc fingers span residues 237-261 (FRCKYDGCGKLYTTAHHLKVHERSH), 267-291 (YQCEHSGCGKAFATGYGLKSHFRTH), 297-321 (YRCSEDNCTKSFKTSGDLQKHIRTH), and 327-351 (FKCPIEGCGRSFTTSNIRKVHIRTH). The residue at position 352 (Thr352) is a Phosphothreonine. 3 C2H2-type zinc fingers span residues 357–381 (YYCTEPGCGRAFASATNYKNHVRIH), 387–411 (YVCTVPGCDKRFTEYSSLYKHHVVH), and 417–440 (YNCNHCGKTYKQISTLAMHKRTAH). A Glycyl lysine isopeptide (Lys-Gly) (interchain with G-Cter in SUMO2) cross-link involves residue Lys406.

This sequence belongs to the GLI C2H2-type zinc-finger protein family. In terms of assembly, interacts with CHD8. Forms a complex with HCFC1 and ZNF143.

The protein localises to the nucleus. Transcriptional activator. In complex with HCFC1 and ZNF143, regulates the expression of several genes, including AP2S1, ESCO2, OPHN1, RBL1, UBXN8 and ZNF32. Activates the gene for selenocysteine tRNA (tRNAsec). Binds to the SPH motif of small nuclear RNA (snRNA) gene promoters. Participates in efficient U6 RNA polymerase III transcription via its interaction with CHD8. In Rattus norvegicus (Rat), this protein is Zinc finger protein 143 (Znf143).